The following is a 331-amino-acid chain: Pantothenate kinase (331 aa).

An ATP-binding site is contributed by 109-116; the sequence is GSVAVGKS.

The protein belongs to the prokaryotic pantothenate kinase family.

It localises to the cytoplasm. The enzyme catalyses (R)-pantothenate + ATP = (R)-4'-phosphopantothenate + ADP + H(+). It participates in cofactor biosynthesis; coenzyme A biosynthesis; CoA from (R)-pantothenate: step 1/5. This is Pantothenate kinase from Rhizobium etli (strain CIAT 652).